The chain runs to 527 residues: Amino acid transporter heavy chain SLC3A2 (527 aa).

The interval methionine 1–alanine 31 is disordered. At methionine 1–arginine 75 the chain is on the cytoplasmic side. A Phosphoserine modification is found at serine 2. Threonine 5 is modified (phosphothreonine). A compositionally biased stretch (basic and acidic residues) spans valine 7 to lysine 21. A Glycyl lysine isopeptide (Lys-Gly) (interchain with G-Cter in ubiquitin) cross-link involves residue lysine 42. Serine 58 carries the phosphoserine modification. A Glycyl lysine isopeptide (Lys-Gly) (interchain with G-Cter in SUMO2) cross-link involves residue lysine 59. Residues tryptophan 76–valine 98 traverse the membrane as a helical; Signal-anchor for type II membrane protein segment. Residues arginine 99–alanine 527 are Extracellular-facing. 4 N-linked (GlcNAc...) asparagine glycosylation sites follow: asparagine 166, asparagine 249, asparagine 259, and asparagine 263. Serine 300 is modified (phosphoserine). N-linked (GlcNAc...) asparagine glycans are attached at residues asparagine 318, asparagine 386, and asparagine 400. Serine 421 carries the post-translational modification Phosphoserine. N-linked (GlcNAc...) asparagine glycosylation is present at asparagine 510.

Belongs to the SLC3A transporter family. Disulfide-linked heterodimer with a non-glycosylated light chain (SLC7A5, SLC7A6, SLC7A7, SLC7A8, SLC7A10 or SLC7A11). Interacts with TLCD3A/CT120 and ICAM1. Constitutively and specifically associates with beta-1 integrins (alpha-2/beta-1, alpha-3/beta-1, alpha-5/beta-1 and alpha-6/beta-1), but minimally with alpha-4/beta-1. Interacts with LAPTM4B; recruits SLC3A2 and SLC7A5 to lysosomes to promote leucine uptake into these organelles and is required for mTORC1 activation. In terms of processing, phosphorylation on Ser-300 and on Ser-421 by ecto-protein kinases favors heterotypic cell-cell interactions. N-glycosylated; N-glycosylation is crucial for trafficking and stability of SLC3A2 to the plasma membrane. In brain expressed on capillary endothelia in cerebral cortex (at protein level). Highest expression in kidney, jejunum, ileum, colon, placenta, testis and spleen. Lower levels found in liver, lung and brain with weakest expression in heart. Expressed in retina, inner blood-retinal barrier of retina, retinal vascular endothelial cells. Also expressed in C6 glioma cells and in the retinal capillary endothelial cell line TR-iBRB2.

It is found in the apical cell membrane. Its subcellular location is the cell membrane. The protein resides in the cell junction. The protein localises to the lysosome membrane. It localises to the melanosome. It is found in the basolateral cell membrane. Functionally, acts as a chaperone that facilitates biogenesis and trafficking of functional transporters heterodimers to the plasma membrane. Forms heterodimer with SLC7 family transporters (SLC7A5, SLC7A6, SLC7A7, SLC7A8, SLC7A10 and SLC7A11), a group of amino-acid antiporters. Heterodimers function as amino acids exchangers, the specificity of the substrate depending on the SLC7A subunit. Heterodimers formed by SLC3A2/SLC7A6 or SLC3A2/SLC7A7 mediate the uptake of dibasic amino acids. Heterodimer SLC3A2/SLC7A11 functions as an antiporter by mediating the exchange of extracellular anionic L-cystine and intracellular L-glutamate across the cellular plasma membrane. SLC3A2/SLC7A10 translocates small neutral L- and D-amino acids across the plasma membrane. SLC3A2/SLC75 or SLC3A2/SLC7A8 translocates neutral amino acids with broad specificity, thyroid hormones and L-DOPA. SLC3A2 is essential for plasma membrane localization, stability, and the transport activity of SLC7A5 and SLC7A8. When associated with LAPTM4B, the heterodimer SLC7A5 is recruited to lysosomes to promote leucine uptake into these organelles, and thereby mediates mTORC1 activation. Modulates integrin-related signaling and is essential for integrin-dependent cell spreading, migration and tumor progression. The sequence is that of Amino acid transporter heavy chain SLC3A2 from Rattus norvegicus (Rat).